Here is a 199-residue protein sequence, read N- to C-terminus: Pyridoxine/pyridoxamine 5'-phosphate oxidase (199 aa).

FMN is bound by residues 44-49 (RTVLLK), 59-60 (YT), lysine 66, and glutamine 91. Residue lysine 49 participates in substrate binding. 3 residues coordinate substrate: tyrosine 109, arginine 113, and serine 117. Residues 126–127 (QS) and tryptophan 171 each bind FMN. 177–179 (RLH) is a binding site for substrate. FMN is bound at residue arginine 181.

This sequence belongs to the pyridoxamine 5'-phosphate oxidase family. In terms of assembly, homodimer. Requires FMN as cofactor.

The catalysed reaction is pyridoxamine 5'-phosphate + O2 + H2O = pyridoxal 5'-phosphate + H2O2 + NH4(+). It carries out the reaction pyridoxine 5'-phosphate + O2 = pyridoxal 5'-phosphate + H2O2. The protein operates within cofactor metabolism; pyridoxal 5'-phosphate salvage; pyridoxal 5'-phosphate from pyridoxamine 5'-phosphate: step 1/1. It functions in the pathway cofactor metabolism; pyridoxal 5'-phosphate salvage; pyridoxal 5'-phosphate from pyridoxine 5'-phosphate: step 1/1. In terms of biological role, catalyzes the oxidation of either pyridoxine 5'-phosphate (PNP) or pyridoxamine 5'-phosphate (PMP) into pyridoxal 5'-phosphate (PLP). In Xanthomonas euvesicatoria pv. vesicatoria (strain 85-10) (Xanthomonas campestris pv. vesicatoria), this protein is Pyridoxine/pyridoxamine 5'-phosphate oxidase.